Consider the following 376-residue polypeptide: Arf-GAP with dual PH domain-containing protein 2 (376 aa).

The 122-residue stretch at 9–130 (KRLLELLQAA…EFMAEKAVSP (122 aa)) folds into the Arf-GAP domain. The C4-type zinc-finger motif lies at 25 to 48 (CADCGAADPDWASYKLGVFICLHC). PH domains are found at residues 131-232 (PGDR…AARL) and 254-360 (NYLK…GVLS).

Expressed in many tissues, with highest levels in fat, heart and skeletal muscle. Also detected in kidney, liver and lung.

Its subcellular location is the cytoplasm. The protein localises to the cell membrane. GTPase-activating protein for the ADP ribosylation factor family (Potential). Binds phosphatidylinositol 4,5-bisphosphate, phosphatidylinositol 3,4,5-trisphosphate (PtdInsP3) and inositol 1,3,4,5-tetrakisphosphate (InsP4). Binding of phosphatidylinositol 3,5-bisphosphate and phosphatidylinositol 3,4-bisphosphate occurs at a much lower affinity. Possesses a stoichiometry of two binding sites for InsP4 with identical affinity. This is Arf-GAP with dual PH domain-containing protein 2 (Adap2) from Rattus norvegicus (Rat).